A 217-amino-acid polypeptide reads, in one-letter code: AFG2-interacting ribosome maturation factor (217 aa).

In terms of assembly, part of the 55LCC heterohexameric ATPase complex composed at least of AIRIM, AFG2A, AFG2B and CINP. Does not associate with pre-60S ribosomal particles. Phosphorylated on serines by CK2 kinase.

It localises to the nucleus. The protein localises to the cytoplasm. Its function is as follows. Part of the 55LCC heterohexameric ATPase complex which is chromatin-associated and promotes replisome proteostasis to maintain replication fork progression and genome stability. Required for replication fork progression, sister chromatid cohesion, and chromosome stability. The ATPase activity is specifically enhanced by replication fork DNA and is coupled to cysteine protease-dependent cleavage of replisome substrates in response to replication fork damage. Uses ATPase activity to process replisome substrates in S-phase, facilitating their proteolytic turnover from chromatin to ensure DNA replication and mitotic fidelity. Involved in the cytoplasmic maturation steps of pre-60S ribosomal particles by promoting the release of shuttling protein RSL24D1/RLP24 from the pre-ribosomal particles. The protein is AFG2-interacting ribosome maturation factor (Airim) of Mus musculus (Mouse).